We begin with the raw amino-acid sequence, 367 residues long: Mitochondrial distribution and morphology protein 34 (367 aa).

Residues Met-1–Gln-197 form the SMP-LTD domain. Disordered regions lie at residues Gln-267–Ser-311 and Pro-347–Ser-367. A compositionally biased stretch (polar residues) spans Phe-286–Ala-302.

It belongs to the MDM34 family. Component of the ER-mitochondria encounter structure (ERMES) or MDM complex, composed of MMM1, MDM10, MDM12 and MDM34.

Its subcellular location is the mitochondrion outer membrane. Its function is as follows. Component of the ERMES/MDM complex, which serves as a molecular tether to connect the endoplasmic reticulum (ER) and mitochondria. Components of this complex are involved in the control of mitochondrial shape and protein biogenesis, and function in nonvesicular lipid trafficking between the ER and mitochondria. MDM34 is required for the interaction of the ER-resident membrane protein MMM1 and the outer mitochondrial membrane-resident beta-barrel protein MDM10. The polypeptide is Mitochondrial distribution and morphology protein 34 (Malassezia globosa (strain ATCC MYA-4612 / CBS 7966) (Dandruff-associated fungus)).